A 258-amino-acid polypeptide reads, in one-letter code: Ditrans,polycis-undecaprenyl-diphosphate synthase ((2E,6E)-farnesyl-diphosphate specific) (258 aa).

Asp-24 is a catalytic residue. Asp-24 lines the Mg(2+) pocket. Residues Gly-25–Arg-28, Trp-29, Arg-37, His-41, and Ser-69–Glu-71 each bind substrate. Asn-72 (proton acceptor) is an active-site residue. Substrate contacts are provided by residues Trp-73, Arg-75, Arg-192, and Arg-198–Ser-200. Residue Glu-211 participates in Mg(2+) binding.

Belongs to the UPP synthase family. In terms of assembly, homodimer. Mg(2+) is required as a cofactor.

The catalysed reaction is 8 isopentenyl diphosphate + (2E,6E)-farnesyl diphosphate = di-trans,octa-cis-undecaprenyl diphosphate + 8 diphosphate. Functionally, catalyzes the sequential condensation of isopentenyl diphosphate (IPP) with (2E,6E)-farnesyl diphosphate (E,E-FPP) to yield (2Z,6Z,10Z,14Z,18Z,22Z,26Z,30Z,34E,38E)-undecaprenyl diphosphate (di-trans,octa-cis-UPP). UPP is the precursor of glycosyl carrier lipid in the biosynthesis of bacterial cell wall polysaccharide components such as peptidoglycan and lipopolysaccharide. The polypeptide is Ditrans,polycis-undecaprenyl-diphosphate synthase ((2E,6E)-farnesyl-diphosphate specific) (Xanthomonas campestris pv. campestris (strain ATCC 33913 / DSM 3586 / NCPPB 528 / LMG 568 / P 25)).